We begin with the raw amino-acid sequence, 79 residues long: Putative defensin-like protein 80 (79 aa).

The signal sequence occupies residues 1-26 (MDVQRSSYIFIALSIIAMFLITGVKP). 4 disulfide bridges follow: Cys32-Cys65, Cys36-Cys58, Cys44-Cys63, and Cys48-Cys64.

Belongs to the DEFL family.

The protein localises to the secreted. This Arabidopsis thaliana (Mouse-ear cress) protein is Putative defensin-like protein 80 (LCR81).